The primary structure comprises 396 residues: S-adenosylmethionine synthase (396 aa).

Glu12 provides a ligand contact to Mg(2+). His18 serves as a coordination point for ATP. Glu46 is a K(+) binding site. L-methionine-binding residues include Glu59 and Gln102. Residues 170–172, 238–241, Asp249, 255–256, Ala272, Lys276, and Lys280 each bind ATP; these read DGK, SGRF, and RK. Asp249 lines the L-methionine pocket. An L-methionine-binding site is contributed by Lys280.

It belongs to the AdoMet synthase family. As to quaternary structure, homotetramer. The cofactor is Mn(2+). It depends on Mg(2+) as a cofactor. Requires Co(2+) as cofactor. K(+) is required as a cofactor.

The protein localises to the cytoplasm. The catalysed reaction is L-methionine + ATP + H2O = S-adenosyl-L-methionine + phosphate + diphosphate. The protein operates within amino-acid biosynthesis; S-adenosyl-L-methionine biosynthesis; S-adenosyl-L-methionine from L-methionine: step 1/1. Catalyzes the formation of S-adenosylmethionine from methionine and ATP. The reaction comprises two steps that are both catalyzed by the same enzyme: formation of S-adenosylmethionine (AdoMet) and triphosphate, and subsequent hydrolysis of the triphosphate. The protein is S-adenosylmethionine synthase (SAMS) of Triticum aestivum (Wheat).